The sequence spans 865 residues: Chitin synthase 3 (865 aa).

The interval 1–59 is disordered; the sequence is MASQYPGHQLDDIPSTNVYRPPPRHEDDEAEHALLHQNSAYQSQYDDPHSRPLTPGQES. The segment covering 23–34 has biased composition (basic and acidic residues); the sequence is PRHEDDEAEHAL. Polar residues predominate over residues 36–45; it reads HQNSAYQSQY. Asparagine 64, asparagine 95, and asparagine 538 each carry an N-linked (GlcNAc...) asparagine glycan. 3 consecutive transmembrane segments (helical) span residues 565–585, 620–640, and 650–670; these read FFLH…WFSL, IINT…FILA, and VAYI…IVLS. A glycan (N-linked (GlcNAc...) asparagine) is linked at asparagine 682. The next 3 helical transmembrane spans lie at 707 to 727, 735 to 755, and 837 to 857; these read IVII…FLYM, SFAQ…IYAF, and LVAT…SDSL.

It belongs to the chitin synthase family. Class III subfamily.

The protein localises to the cell membrane. The enzyme catalyses [(1-&gt;4)-N-acetyl-beta-D-glucosaminyl](n) + UDP-N-acetyl-alpha-D-glucosamine = [(1-&gt;4)-N-acetyl-beta-D-glucosaminyl](n+1) + UDP + H(+). Polymerizes chitin, a structural polymer of the cell wall and septum, by transferring the sugar moiety of UDP-GlcNAc to the non-reducing end of the growing chitin polymer. Is not only stable at different pH, but is also able to tolerate a broad temperature range. With CHS2, plays an important role in virulence. In Exophiala dermatitidis (strain ATCC 34100 / CBS 525.76 / NIH/UT8656) (Black yeast), this protein is Chitin synthase 3.